The sequence spans 329 residues: Malate dehydrogenase (329 aa).

Position 11–17 (Gly-11–Ala-17) interacts with NAD(+). Substrate-binding residues include Arg-92 and Arg-98. Residues Asn-105, Gln-112, and Val-129–Asn-131 contribute to the NAD(+) site. Substrate-binding residues include Asn-131 and Arg-162. The active-site Proton acceptor is His-187.

This sequence belongs to the LDH/MDH superfamily. MDH type 2 family.

The catalysed reaction is (S)-malate + NAD(+) = oxaloacetate + NADH + H(+). Catalyzes the reversible oxidation of malate to oxaloacetate. This chain is Malate dehydrogenase, found in Akkermansia muciniphila (strain ATCC BAA-835 / DSM 22959 / JCM 33894 / BCRC 81048 / CCUG 64013 / CIP 107961 / Muc).